Here is a 107-residue protein sequence, read N- to C-terminus: Precursor of CEP14 (107 aa).

The N-terminal stretch at 1 to 21 (MAVRLIPTIWLFIVFAVIVSA) is a signal peptide. The propeptide occupies 22-92 (LPSLVSSRKL…GKLRSRHLST (71 aa)). Asn39 is a glycosylation site (N-linked (GlcNAc...) asparagine). The segment at 43–76 (REEEKSHMPHVTKTSTLSALPKGKIPNSTPSKKG) is disordered. Hydroxyproline occurs at positions 101 and 103.

It belongs to the C-terminally encoded plant signaling peptide (CEP) family. In terms of assembly, interacts with CEP receptors (e.g. CEPR1 and CEPR2). In terms of processing, the mature small signaling peptide is generated by proteolytic processing of the longer precursor.

The protein localises to the secreted. The protein resides in the extracellular space. It localises to the apoplast. Extracellular signaling peptide that may regulate primary root growth rate and systemic nitrogen (N)-demand signaling. The sequence is that of Precursor of CEP14 from Arabidopsis thaliana (Mouse-ear cress).